The sequence spans 753 residues: MTILNHTLGFPRVGLRRELKKAQESYWAGNSTREELLTVGRELRARHWDQQKQAGIDLLPVGDFAWYDHVLTTSLLLGNVPPRHQNKDGSVDIDTLFRIGRGRAPTGEPAAAAEMTKWFNTNYHYMVPEFVKGQQFKLTWTQLLEEVDEALALGHNVKPVLLGPVTYLWLGKVKGEQFDRLSLLNDILPVYQQVLAELAKRGIEWVQIDEPALVLELPQAWLDAYKPAYDALQGQVKLLLTTYFEGVTPNLDTITALPVQGLHVDLVHGKDDVAELHKRLPSDWLLSAGLINGRNVWRADLTEKYAQIKDIVGKRDLWVASSCSLLHSPIDLSVETRLDAEVKSWFAFALQKCHELALLRDALNSGDTAALAEWSAPIQARRHSTRVHNPAVEKRLAAITAQDSQRANVYEVRAEAQRARFKLPAWPTTTIGSFPQTTEIRTLRLDFKKGNLDANNYRTGIAEHIRQAIVEQERLGLDVLVHGEAERNDMVEYFGEHLDGFVFTQNGWVQSYGSRCVKPPIVIGDVSRPAPITVEWAKYAQSLTDKPVKGMLTGPVTILCWSFPREDVSRETIAKQIALALRDEVADLEAAGIGIIQIDEPALREGLPLRRSDWDAYLQWGVEAFRINAAVAKDDTQIHTHMCYCEFNDIMDSIAALDADVITIETSRSDMELLESFEEFDYPNEIGPGVYDIHSPNVPSVEWIEALLKKAAKRIPAERLWVNPDCGLKTRGWPETRAALANMVQAAQNLRRG.

5-methyltetrahydropteroyltri-L-glutamate-binding positions include 17 to 20 (RELK) and K117. L-homocysteine-binding positions include 431-433 (IGS) and E484. Residues 431–433 (IGS) and E484 each bind L-methionine. Residues 515 to 516 (RC) and W561 contribute to the 5-methyltetrahydropteroyltri-L-glutamate site. An L-homocysteine-binding site is contributed by D599. D599 contacts L-methionine. E605 is a 5-methyltetrahydropteroyltri-L-glutamate binding site. 3 residues coordinate Zn(2+): H641, C643, and E665. H694 functions as the Proton donor in the catalytic mechanism. C726 contributes to the Zn(2+) binding site.

It belongs to the vitamin-B12 independent methionine synthase family. It depends on Zn(2+) as a cofactor.

The enzyme catalyses 5-methyltetrahydropteroyltri-L-glutamate + L-homocysteine = tetrahydropteroyltri-L-glutamate + L-methionine. Its pathway is amino-acid biosynthesis; L-methionine biosynthesis via de novo pathway; L-methionine from L-homocysteine (MetE route): step 1/1. Its function is as follows. Catalyzes the transfer of a methyl group from 5-methyltetrahydrofolate to homocysteine resulting in methionine formation. This chain is 5-methyltetrahydropteroyltriglutamate--homocysteine methyltransferase, found in Shigella sonnei (strain Ss046).